The sequence spans 320 residues: MQTRNTFSWIREEITRSISVSLMIYIITWASISSAYPIFAQQNYENPREATGRIVCANCHLANKPVDIEVPQTVLPDTVFEAVVKIPYDMQLKQVLANGKKGALNVGAVLILPEGFELAPPDRISPEMKEKIGNLSFQNYRPNKKNILVIGPVPGQKYSEITFPILAPDPATNKDVHFLKYPIYVGGNRGRGQIYPDGSKSNNTVYNATAGGIISKILRKEKGGYEITIVDASNERQVIDIIPRGLELLVSEGESIKLDQPLTSNPNVGGFGQGDAEIVLQDPLRVQGLLFFLGSVVLAQIFLVLKKKQFEKVQLSEMNF.

The signal sequence occupies residues 1-35 (MQTRNTFSWIREEITRSISVSLMIYIITWASISSA). Heme is bound by residues Y36, C56, C59, and H60. The helical transmembrane segment at 286–306 (VQGLLFFLGSVVLAQIFLVLK) threads the bilayer.

This sequence belongs to the cytochrome f family. The 4 large subunits of the cytochrome b6-f complex are cytochrome b6, subunit IV (17 kDa polypeptide, petD), cytochrome f and the Rieske protein, while the 4 small subunits are PetG, PetL, PetM and PetN. The complex functions as a dimer. Heme is required as a cofactor.

Its subcellular location is the plastid. The protein resides in the chloroplast thylakoid membrane. Its function is as follows. Component of the cytochrome b6-f complex, which mediates electron transfer between photosystem II (PSII) and photosystem I (PSI), cyclic electron flow around PSI, and state transitions. In Lepidium virginicum (Virginia pepperweed), this protein is Cytochrome f.